The sequence spans 581 residues: Pyridine nucleotide-disulfide oxidoreductase domain-containing protein 2 (581 aa).

Position 38 to 71 (38 to 71) interacts with FAD; sequence VVIGAGHNGLVAAAYLQRLGVNTAVFERRHVIGG.

It belongs to the carotenoid/retinoid oxidoreductase family. Interacts with COX5B; this interaction may contribute to localize PYROXD2 to the inner face of the inner mitochondrial membrane.

It localises to the mitochondrion matrix. Functionally, probable oxidoreductase that may play a role as regulator of mitochondrial function. In Mus musculus (Mouse), this protein is Pyridine nucleotide-disulfide oxidoreductase domain-containing protein 2.